The following is a 241-amino-acid chain: Probable xyloglucan-specific endo-beta-1,4-glucanase A (241 aa).

An N-terminal signal peptide occupies residues 1-15 (MKVLALSALLSLASA). Asn-47 carries an N-linked (GlcNAc...) asparagine glycan.

It belongs to the glycosyl hydrolase 12 (cellulase H) family.

The protein localises to the secreted. The catalysed reaction is xyloglucan + H2O = xyloglucan oligosaccharides.. Its function is as follows. Catalyzes endohydrolysis of 1,4-beta-D-glucosidic linkages in xyloglucan with retention of the beta-configuration of the glycosyl residues. Specific for xyloglucan and does not hydrolyze other cell wall components. The chain is Probable xyloglucan-specific endo-beta-1,4-glucanase A (xgeA) from Aspergillus niger (strain ATCC MYA-4892 / CBS 513.88 / FGSC A1513).